The following is a 78-amino-acid chain: Acyl carrier protein (78 aa).

In terms of domain architecture, Carrier spans 2–77 (SDTAERVKKI…DAVKYIEKAT (76 aa)). O-(pantetheine 4'-phosphoryl)serine is present on S37.

This sequence belongs to the acyl carrier protein (ACP) family. Post-translationally, 4'-phosphopantetheine is transferred from CoA to a specific serine of apo-ACP by AcpS. This modification is essential for activity because fatty acids are bound in thioester linkage to the sulfhydryl of the prosthetic group.

It is found in the cytoplasm. Its pathway is lipid metabolism; fatty acid biosynthesis. Carrier of the growing fatty acid chain in fatty acid biosynthesis. The polypeptide is Acyl carrier protein (Chelativorans sp. (strain BNC1)).